A 167-amino-acid chain; its full sequence is ATP synthase subunit b (167 aa).

A helical membrane pass occupies residues 9 to 29 (ALPLGNMLFIIIAFLLLMLIL).

Belongs to the ATPase B chain family. In terms of assembly, F-type ATPases have 2 components, F(1) - the catalytic core - and F(0) - the membrane proton channel. F(1) has five subunits: alpha(3), beta(3), gamma(1), delta(1), epsilon(1). F(0) has three main subunits: a(1), b(2) and c(10-14). The alpha and beta chains form an alternating ring which encloses part of the gamma chain. F(1) is attached to F(0) by a central stalk formed by the gamma and epsilon chains, while a peripheral stalk is formed by the delta and b chains.

Its subcellular location is the cell membrane. In terms of biological role, f(1)F(0) ATP synthase produces ATP from ADP in the presence of a proton or sodium gradient. F-type ATPases consist of two structural domains, F(1) containing the extramembraneous catalytic core and F(0) containing the membrane proton channel, linked together by a central stalk and a peripheral stalk. During catalysis, ATP synthesis in the catalytic domain of F(1) is coupled via a rotary mechanism of the central stalk subunits to proton translocation. Its function is as follows. Component of the F(0) channel, it forms part of the peripheral stalk, linking F(1) to F(0). This Leuconostoc mesenteroides subsp. mesenteroides (strain ATCC 8293 / DSM 20343 / BCRC 11652 / CCM 1803 / JCM 6124 / NCDO 523 / NBRC 100496 / NCIMB 8023 / NCTC 12954 / NRRL B-1118 / 37Y) protein is ATP synthase subunit b.